Consider the following 300-residue polypeptide: Protoheme IX farnesyltransferase (300 aa).

The next 9 membrane-spanning stretches (helical) occupy residues 24–44 (VTQL…PGMV), 46–66 (WHVL…AFAI), 94–114 (PQIL…LYTF), 118–138 (LTMW…TLLL), 146–166 (IVIG…AVTG), 172–192 (AWIL…VLAL), 217–237 (LHIL…FISG), 239–259 (SGAV…AYAW), and 278–298 (IVYL…RPLL).

This sequence belongs to the UbiA prenyltransferase family. Protoheme IX farnesyltransferase subfamily.

Its subcellular location is the cell inner membrane. The catalysed reaction is heme b + (2E,6E)-farnesyl diphosphate + H2O = Fe(II)-heme o + diphosphate. It functions in the pathway porphyrin-containing compound metabolism; heme O biosynthesis; heme O from protoheme: step 1/1. In terms of biological role, converts heme B (protoheme IX) to heme O by substitution of the vinyl group on carbon 2 of heme B porphyrin ring with a hydroxyethyl farnesyl side group. This Burkholderia lata (strain ATCC 17760 / DSM 23089 / LMG 22485 / NCIMB 9086 / R18194 / 383) protein is Protoheme IX farnesyltransferase.